We begin with the raw amino-acid sequence, 223 residues long: MNFNQLIDHTYLKPEATKKNIDNLIMQGFEHNFFSVCVNSIWVKYVKEKIKKLNSNLKITAVVGFPLGASITQAKAHEAKLAVEHGADEIDMVIAVGFLKQKDYEYVLNDIKSVKKAIGNKVLKIIIETALLTKEEIKKATEIVLKSGAEFIKTSTGFSYRGASLDDVVTMKSVIKDQKLEIKAAGGISTLEDMQKMHEAGATRFGLSKSVEILKNQKVETKY.

Asp91 (proton donor/acceptor) is an active-site residue. Lys153 functions as the Schiff-base intermediate with acetaldehyde in the catalytic mechanism. Residue Lys183 is the Proton donor/acceptor of the active site.

This sequence belongs to the DeoC/FbaB aldolase family. DeoC type 1 subfamily.

It is found in the cytoplasm. The catalysed reaction is 2-deoxy-D-ribose 5-phosphate = D-glyceraldehyde 3-phosphate + acetaldehyde. It participates in carbohydrate degradation; 2-deoxy-D-ribose 1-phosphate degradation; D-glyceraldehyde 3-phosphate and acetaldehyde from 2-deoxy-alpha-D-ribose 1-phosphate: step 2/2. Its function is as follows. Catalyzes a reversible aldol reaction between acetaldehyde and D-glyceraldehyde 3-phosphate to generate 2-deoxy-D-ribose 5-phosphate. This is Deoxyribose-phosphate aldolase from Mycoplasmopsis synoviae (strain 53) (Mycoplasma synoviae).